We begin with the raw amino-acid sequence, 2883 residues long: Bifunctional DNA-directed RNA polymerase subunit beta-beta' (2883 aa).

The tract at residues methionine 1 to glutamate 1377 is DNA-directed RNA polymerase subunit beta. A DNA-directed RNA polymerase subunit beta' region spans residues proline 1382–alanine 2883. Cysteine 1447, cysteine 1449, cysteine 1462, and cysteine 1465 together coordinate Zn(2+). Mg(2+) is bound by residues aspartate 1846, aspartate 1848, and aspartate 1850. Positions 2176, 2250, 2257, and 2260 each coordinate Zn(2+).

This sequence in the N-terminal section; belongs to the RNA polymerase beta chain family. It in the C-terminal section; belongs to the RNA polymerase beta' chain family. The RNAP catalytic core consists of 2 alpha, 1 beta/beta' and 1 omega subunit. When a sigma factor is associated with the core the holoenzyme is formed, which can initiate transcription. The cofactor is Mg(2+). Zn(2+) serves as cofactor.

It carries out the reaction RNA(n) + a ribonucleoside 5'-triphosphate = RNA(n+1) + diphosphate. In terms of biological role, DNA-dependent RNA polymerase catalyzes the transcription of DNA into RNA using the four ribonucleoside triphosphates as substrates. The polypeptide is Bifunctional DNA-directed RNA polymerase subunit beta-beta' (rpoBC) (Wolinella succinogenes (strain ATCC 29543 / DSM 1740 / CCUG 13145 / JCM 31913 / LMG 7466 / NCTC 11488 / FDC 602W) (Vibrio succinogenes)).